The sequence spans 289 residues: Protoheme IX farnesyltransferase 2 (289 aa).

Transmembrane regions (helical) follow at residues 13–33 (LEIT…VPGS), 37–57 (IYDL…ASIF), 86–106 (LFFI…FILL), 109–129 (VTSA…TIIL), 137–157 (IVIG…SITG), 159–179 (VSAT…THFW), 207–227 (EFWI…PLFI), 232–252 (VGLL…YYVA), and 267–287 (AFHF…LILV).

The protein belongs to the UbiA prenyltransferase family. Protoheme IX farnesyltransferase subfamily.

The protein resides in the cell membrane. It catalyses the reaction heme b + (2E,6E)-farnesyl diphosphate + H2O = Fe(II)-heme o + diphosphate. Its pathway is porphyrin-containing compound metabolism; heme O biosynthesis; heme O from protoheme: step 1/1. Its function is as follows. Converts heme B (protoheme IX) to heme O by substitution of the vinyl group on carbon 2 of heme B porphyrin ring with a hydroxyethyl farnesyl side group. In Picrophilus torridus (strain ATCC 700027 / DSM 9790 / JCM 10055 / NBRC 100828 / KAW 2/3), this protein is Protoheme IX farnesyltransferase 2.